The following is an 80-amino-acid chain: Secreted transmembrane peptide 3 (80 aa).

An N-terminal signal peptide occupies residues 1–27; the sequence is MGLKMSSNALLLSLFLLLLCLFSEIGG. Positions 44–80 are disordered; that stretch reads IATPPSLTCGGQRLGGPQPRLSPCPRPRPRPRPRTGS. The short motif at 62–80 is the SCOOP motif element; that stretch reads PRLSPCPRPRPRPRPRTGS. Basic residues predominate over residues 70–80; the sequence is PRPRPRPRTGS.

Belongs to the serine rich endogenous peptide (SCOOP) phytocytokine family. In terms of assembly, interacts with MIK2 (via extracellular leucine-rich repeat domain); this interaction triggers the formation of complex between MIK2 and the BAK1/SERK3 and SERK4 coreceptors, and subsequent BAK1 activation by phosphorylation. In terms of tissue distribution, mostly expressed in leaves, and, to a lower extent, in roots, stems, siliques, seeds and flowers.

It localises to the cell membrane. The protein localises to the secreted. Its subcellular location is the extracellular space. The protein resides in the apoplast. It is found in the endoplasmic reticulum. It localises to the golgi apparatus. Its function is as follows. Brassicaceae-specific phytocytokine (plant endogenous peptide released into the apoplast) perceived by MIK2 in a BAK1/SERK3 and SERK4 coreceptors-dependent manner, that modulates various physiological and antimicrobial processes including growth prevention and reactive oxygen species (ROS) response regulation. The polypeptide is Secreted transmembrane peptide 3 (Arabidopsis thaliana (Mouse-ear cress)).